The primary structure comprises 279 residues: Putative pyruvate, phosphate dikinase regulatory protein (279 aa).

153 to 160 (GVSRTSKT) provides a ligand contact to ADP.

Belongs to the pyruvate, phosphate/water dikinase regulatory protein family. PDRP subfamily.

It catalyses the reaction N(tele)-phospho-L-histidyl/L-threonyl-[pyruvate, phosphate dikinase] + ADP = N(tele)-phospho-L-histidyl/O-phospho-L-threonyl-[pyruvate, phosphate dikinase] + AMP + H(+). It carries out the reaction N(tele)-phospho-L-histidyl/O-phospho-L-threonyl-[pyruvate, phosphate dikinase] + phosphate + H(+) = N(tele)-phospho-L-histidyl/L-threonyl-[pyruvate, phosphate dikinase] + diphosphate. In terms of biological role, bifunctional serine/threonine kinase and phosphorylase involved in the regulation of the pyruvate, phosphate dikinase (PPDK) by catalyzing its phosphorylation/dephosphorylation. This chain is Putative pyruvate, phosphate dikinase regulatory protein, found in Rhodopseudomonas palustris (strain ATCC BAA-98 / CGA009).